Here is a 505-residue protein sequence, read N- to C-terminus: Forkhead box protein O4 (505 aa).

The span at 1 to 10 (MDPGNENSAT) shows a compositional bias: polar residues. Disordered stretches follow at residues 1 to 100 (MDPG…RRNA) and 176 to 246 (SWWM…CSRN). A Phosphothreonine; by PKB/AKT1 modification is found at Thr32. A compositionally biased stretch (basic and acidic residues) spans 54-64 (LGEKVHTEGRS). Residues 100 to 188 (AWGNQSYAEL…MLNPEGGKSG (89 aa)) constitute a DNA-binding region (fork-head). Ser197 carries the phosphoserine; by PKB/AKT1 modification. The span at 205-216 (LRGRSKAPKKKP) shows a compositional bias: basic residues. Residue Ser262 is modified to Phosphoserine; by PKB/AKT1.

In terms of assembly, interacts with CREBBP/CBP, CTNNB1, MYOCD, SIRT1, SRF and YWHAZ. Acetylated by CREBBP/CBP and deacetylated by SIRT1. Binding of YWHAZ inhibits DNA-binding. Interacts with USP7; the interaction is enhanced in presence of hydrogen peroxide and occurs independently of TP53. Interacts with NLK, and this inhibits monoubiquitination and transcriptional activity. Interacts with FOXK1; the interaction inhibits MEF2C transactivation activity. Acetylation by CREBBP/CBP, which is induced by peroxidase stress, inhibits transcriptional activity. Deacetylation by SIRT1 is NAD-dependent and stimulates transcriptional activity. Post-translationally, phosphorylation by PKB/AKT1 inhibits transcriptional activity and is responsible for cytoplasmic localization. May be phosphorylated at multiple sites by NLK. In terms of processing, monoubiquitinated; monoubiquitination is induced by oxidative stress and reduced by deacetylase inhibitors; results in its relocalization to the nucleus and its increased transcriptional activity. Deubiquitinated by USP7; deubiquitination is induced by oxidative stress; enhances its interaction with USP7 and consequently, deubiquitination; increases its translocation to the cytoplasm and inhibits its transcriptional activity. Hydrogene-peroxide-induced ubiquitination and USP7-mediated deubiquitination have no major effect on its protein stability. In terms of tissue distribution, heart, brain, placenta, lung, liver, skeletal muscle, kidney and pancreas. Isoform zeta is most abundant in the liver, kidney, and pancreas.

It is found in the cytoplasm. The protein resides in the nucleus. Its function is as follows. Transcription factor involved in the regulation of the insulin signaling pathway. Binds to insulin-response elements (IREs) and can activate transcription of IGFBP1. Down-regulates expression of HIF1A and suppresses hypoxia-induced transcriptional activation of HIF1A-modulated genes. Also involved in negative regulation of the cell cycle. Involved in increased proteasome activity in embryonic stem cells (ESCs) by activating expression of PSMD11 in ESCs, leading to enhanced assembly of the 26S proteasome, followed by higher proteasome activity. The polypeptide is Forkhead box protein O4 (FOXO4) (Homo sapiens (Human)).